We begin with the raw amino-acid sequence, 517 residues long: 3-hydroxyphenylacetate 6-hydroxylase (517 aa).

Residue C449 coordinates heme.

Belongs to the cytochrome P450 family.

It catalyses the reaction 3-hydroxyphenylacetate + NADH + O2 + H(+) = homogentisate + NAD(+) + H2O. The enzyme catalyses 3-hydroxyphenylacetate + NADPH + O2 + H(+) = homogentisate + NADP(+) + H2O. It carries out the reaction 3,4-dihydroxyphenylacetate + NADH + O2 + H(+) = 2,4,5-trihydroxyphenylacetate + NAD(+) + H2O. The catalysed reaction is 3,4-dihydroxyphenylacetate + NADPH + O2 + H(+) = 2,4,5-trihydroxyphenylacetate + NADP(+) + H2O. Its pathway is aromatic compound metabolism; phenylacetate degradation. In terms of biological role, catalyzes the hydroxylation of 3-hydroxyphenylacetate and 3,4-dihydroxyphenylacetate to 2,5-dihydroxyphenylacetate (homogentisate) and 2,4,5-trihydroxyphenylacetate, respectively. Both of these compounds are used as substrate by homogentisate dioxygenase in the homogentisate pathway. The homogentisate pathway is used to catabolize phenylacetate and use it as a carbon source. Can also catalyze the hydroxylation of phenylacetate to 2-hydroxyphenylacetate at low efficiency to compensate for loss of phacA. The protein is 3-hydroxyphenylacetate 6-hydroxylase (phacB) of Emericella nidulans (Aspergillus nidulans).